The chain runs to 1431 residues: Probable ATP-dependent RNA helicase spindle-E (1431 aa).

The Helicase ATP-binding domain maps to 127–294 (LAAIRENPVV…FAMSSSLPPV (168 aa)). 140–147 (GETGCGKT) serves as a coordination point for ATP. The short motif at 240-243 (DEVH) is the DEAH box element. The 173-residue stretch at 354-526 (QSQQSYEEAK…NSVLKAKELE (173 aa)) folds into the Helicase C-terminal domain. Residues 937–1000 (AKAVTKGLQL…RLMSPQLKRD (64 aa)) enclose the Tudor domain.

Belongs to the DEAD box helicase family. DEAH subfamily.

It localises to the cytoplasm. The enzyme catalyses ATP + H2O = ADP + phosphate + H(+). Its function is as follows. Probable ATP-binding RNA helicase which plays a central role during spermatogenesis and oogenesis by repressing transposable elements and preventing their mobilization, which is essential for the germline integrity. Acts via the piRNA metabolic process, which mediates the repression of transposable elements during meiosis by forming complexes composed of piRNAs and Piwi and govern the methylation and subsequent repression of transposons. Involved in the repression of LTR retrotransposon copia. Also involved in telomere regulation by repressing specialized telomeric retroelements HeT-A, TAHRE, and TART; Drosophila telomeres being maintained by transposition of specialized telomeric retroelements. Involved in telomeric trans-silencing, a repression mechanism by which a transposon or a transgene inserted in subtelomeric heterochromatin has the capacity to repress in trans in the female germline, a homologous transposon, or transgene located in euchromatin. Involved in the repression of testis-expressed Stellate genes by the homologous Su(Ste) repeats. Required for anteroposterior and dorsoventral axis formation during oogenesis. In Drosophila mojavensis (Fruit fly), this protein is Probable ATP-dependent RNA helicase spindle-E (spn-E).